A 496-amino-acid polypeptide reads, in one-letter code: Flotillin-like protein 3 (496 aa).

Residue C37 is the site of S-palmitoyl cysteine attachment. Positions 301–328 form a coiled coil; that stretch reads VVREAELQLEVERKNALRLTEKLKAEKL.

It belongs to the band 7/mec-2 family. Flotillin subfamily. In terms of processing, may be palmitoylated.

It is found in the cell membrane. The protein localises to the membrane. It localises to the caveola. May act as a scaffolding protein within caveolar membranes, functionally participating in formation of caveolae or caveolae-like vesicles. The chain is Flotillin-like protein 3 (FLOT3) from Oryza sativa subsp. japonica (Rice).